The chain runs to 680 residues: Meiotic recombination protein REC8 (680 aa).

Composition is skewed to low complexity over residues 278–290 (ENDN…GGED) and 436–446 (SLVSTQSSSST). 3 disordered regions span residues 278-297 (ENDN…ENEG), 431-467 (RKRA…YSSD), and 540-560 (EQNF…GSQQ). Residues 550-560 (SNSCFSDGSQQ) are compositionally biased toward polar residues.

It belongs to the rad21 family. Proteolytically cleaved by ESP1. In terms of processing, phosphorylated by CDC5. CDC5 phosphorylation is necessary for cleavage by ESP1 and subsequent removal from chromosome arms.

It localises to the nucleus. Its subcellular location is the chromosome. The protein resides in the centromere. Replaces the SCC1 mitosis-specific cohesin to ensure sister chromatid cohesion during meiosis. Is cleaved by ESP1 shortly before the first meiotic division, and dissociates from chromatin, allowing sister chromatids to segregate. Is protected from cleavage by SPO13. Promotes localization of the LINC complex subunit MPS3 on nuclear envelope in mitotic cells. This chain is Meiotic recombination protein REC8, found in Saccharomyces cerevisiae (strain ATCC 204508 / S288c) (Baker's yeast).